The sequence spans 354 residues: Tyrosine recombinase XerH (354 aa).

The Core-binding (CB) domain maps to 48-134 (LTKGVKNIDE…AVINFFDFLD (87 aa)). The 184-residue stretch at 163-346 (KLPEFMSKEE…DNDKLKLAAQ (184 aa)) folds into the Tyr recombinase domain. Residues Arg-205, Lys-231, His-298, Arg-301, and His-324 contribute to the active site. Catalysis depends on Tyr-333, which acts as the O-(3'-phospho-DNA)-tyrosine intermediate.

This sequence belongs to the 'phage' integrase family. XerH subfamily.

It is found in the cytoplasm. Its activity is regulated as follows. FtsK is required for efficient recombination. Its function is as follows. Site-specific tyrosine recombinase, which acts by catalyzing the cutting and rejoining of the recombining DNA molecules. Binds to the complete atypical dif motif (difH) site and to both halves separately. This chain is Tyrosine recombinase XerH, found in Campylobacter jejuni subsp. jejuni serotype O:2 (strain ATCC 700819 / NCTC 11168).